Here is a 120-residue protein sequence, read N- to C-terminus: Large ribosomal subunit protein uL18 (120 aa).

Belongs to the universal ribosomal protein uL18 family. As to quaternary structure, part of the 50S ribosomal subunit; part of the 5S rRNA/L5/L18/L25 subcomplex. Contacts the 5S and 23S rRNAs.

In terms of biological role, this is one of the proteins that bind and probably mediate the attachment of the 5S RNA into the large ribosomal subunit, where it forms part of the central protuberance. This Bacillus cereus (strain AH820) protein is Large ribosomal subunit protein uL18.